The sequence spans 536 residues: L-aspartate oxidase 2 (536 aa).

Residues 22 to 25 (EGLA) and 51 to 58 (SSYWAQGG) each bind FAD. Arginine 284 (proton donor/acceptor) is an active-site residue. Residues glutamate 369 and 385–386 (SL) each bind FAD.

The protein belongs to the FAD-dependent oxidoreductase 2 family. NadB subfamily. Requires FAD as cofactor.

The protein resides in the cytoplasm. The catalysed reaction is L-aspartate + O2 = iminosuccinate + H2O2. Its pathway is cofactor biosynthesis; NAD(+) biosynthesis; iminoaspartate from L-aspartate (oxidase route): step 1/1. In terms of biological role, catalyzes the oxidation of L-aspartate to iminoaspartate, the first step in the de novo biosynthesis of NAD(+). In Ralstonia nicotianae (strain ATCC BAA-1114 / GMI1000) (Ralstonia solanacearum), this protein is L-aspartate oxidase 2 (nadB2).